A 171-amino-acid polypeptide reads, in one-letter code: MQRLLTYRALNFILFIASVVAMLFAIIFLQNYKGLEPCPLCIFQRIGLMVMGGFSLIAAVGHPKKMGMQLLLWIGSMAGILWSAGVAARHVWIQHLPADQVPACGPGLDYFLEALPMKQVINQVLSGSGECAEISWRFLGLSIPEQALILFTALILVNLLVLWRIISKRTA.

Residues 1-10 are Cytoplasmic-facing; the sequence is MQRLLTYRAL. A helical membrane pass occupies residues 11–27; that stretch reads NFILFIASVVAMLFAII. Topologically, residues 28-46 are periplasmic; the sequence is FLQNYKGLEPCPLCIFQRI. A disulfide bond links C38 and C41. Residues 47–63 form a helical membrane-spanning segment; sequence GLMVMGGFSLIAAVGHP. The Cytoplasmic segment spans residues 64 to 70; the sequence is KKMGMQL. A helical transmembrane segment spans residues 71–88; that stretch reads LLWIGSMAGILWSAGVAA. At 89–145 the chain is on the periplasmic side; it reads RHVWIQHLPADQVPACGPGLDYFLEALPMKQVINQVLSGSGECAEISWRFLGLSIPE. C104 and C131 are oxidised to a cystine. The chain crosses the membrane as a helical span at residues 146 to 164; it reads QALILFTALILVNLLVLWR. At 165-171 the chain is on the cytoplasmic side; the sequence is IISKRTA.

The protein belongs to the DsbB family.

The protein localises to the cell inner membrane. In terms of biological role, required for disulfide bond formation in some periplasmic proteins. Acts by oxidizing the DsbA protein. This chain is Disulfide bond formation protein B, found in Psychrobacter sp. (strain PRwf-1).